Reading from the N-terminus, the 660-residue chain is Arginine--tRNA ligase, cytoplasmic (660 aa).

M1 is subject to N-acetylmethionine. The interval 1–72 is could be involved in the assembly of the multisynthetase complex; that stretch reads MDGLVAQCSA…QEERRKPTKN (72 aa). L-arginine contacts are provided by residues 200-202, H211, Y384, D388, and Q412; that span reads SPN. Positions 201-212 match the 'HIGH' region motif; that stretch reads PNIAKEMHVGHL. The segment at 529-543 is interaction with tRNA; that stretch reads NTAAYLLYAFTRIRS.

Belongs to the class-I aminoacyl-tRNA synthetase family. In terms of assembly, interacts (via N-terminus) with AIMP1 (via N-terminus); this stimulates its catalytic activity. Interacts (via N-terminus) with LARS2 (via C-terminus). Monomer. Part of a multisubunit complex that groups tRNA ligases for Arg (RARS1), Asp (DARS1), Gln (QARS1), Ile (IARS1), Leu (LARS1), Lys (KARS1), Met (MARS1) the bifunctional ligase for Glu and Pro (EPRS1) and the auxiliary subunits AIMP1/p43, AIMP2/p38 and EEF1E1/p18. Interacts with QARS1. Part of a complex composed of RARS1, QARS1 and AIMP1.

It is found in the cytoplasm. The protein resides in the cytosol. The enzyme catalyses tRNA(Arg) + L-arginine + ATP = L-arginyl-tRNA(Arg) + AMP + diphosphate. Functionally, forms part of a macromolecular complex that catalyzes the attachment of specific amino acids to cognate tRNAs during protein synthesis. Modulates the secretion of AIMP1 and may be involved in generation of the inflammatory cytokine EMAP2 from AIMP1. The protein is Arginine--tRNA ligase, cytoplasmic (Rars1) of Mus musculus (Mouse).